Reading from the N-terminus, the 326-residue chain is Vitamin B12 import system permease protein BtuC (326 aa).

9 helical membrane passes run 15–35, 61–81, 88–108, 112–132, 146–166, 184–204, 240–260, 274–294, and 302–322; these read WLLCLSVLMLLALLLSLCAGE, LAVLLVGAALAISGAVMQALF, PGLLGVSNGAGVGLIAAVLLG, LPNWALGLCAIAGALIITLIL, LLAGVALGIICSALMTWAIYF, GGVDWRQSWLMLALIPVLLWI, GWMVGVSVALAGAIGFIGLVI, VLLPGCALAGASALLLADVVA, and ELPIGVVTATLGAPVFIWLLL.

The protein belongs to the binding-protein-dependent transport system permease family. FecCD subfamily. As to quaternary structure, the complex is composed of two ATP-binding proteins (BtuD), two transmembrane proteins (BtuC) and a solute-binding protein (BtuF).

It is found in the cell inner membrane. Part of the ABC transporter complex BtuCDF involved in vitamin B12 import. Involved in the translocation of the substrate across the membrane. This Escherichia coli O17:K52:H18 (strain UMN026 / ExPEC) protein is Vitamin B12 import system permease protein BtuC.